We begin with the raw amino-acid sequence, 156 residues long: Large ribosomal subunit protein eL29 (156 aa).

Over residues 1-26 the composition is skewed to basic residues; sequence MAKSKNHTTHNQSRKWHRNGIKKPRS. 2 disordered regions span residues 1-35 and 116-156; these read MAKS…LKGV and RRLC…VKAP. Residue K5 is modified to N6-methyllysine. Residue S31 is modified to Phosphoserine. K33 is modified (N6-acetyllysine). A run of 2 repeats spans residues 129-136 and 137-144. The interval 129–144 is 2 X 8 AA tandem repeats of A-X-A-K-A-P-A-[KQ]; that stretch reads AEAKAPAKAQAKAPAQ. A compositionally biased stretch (low complexity) spans 134 to 156; that stretch reads PAKAQAKAPAQAPKGAQAPVKAP.

Belongs to the eukaryotic ribosomal protein eL29 family. As to quaternary structure, component of the large ribosomal subunit.

It is found in the cytoplasm. Component of the large ribosomal subunit. The ribosome is a large ribonucleoprotein complex responsible for the synthesis of proteins in the cell. This is Large ribosomal subunit protein eL29 (Rpl29) from Rattus norvegicus (Rat).